The following is a 413-amino-acid chain: Histidinol-phosphate aminotransferase, chloroplastic (413 aa).

The transit peptide at 1 to 35 (MGVIELCNTSSICIGRAKPSCCSIERNQRRRIICM) directs the protein to the chloroplast. Lys273 is modified (N6-(pyridoxal phosphate)lysine).

This sequence belongs to the class-II pyridoxal-phosphate-dependent aminotransferase family. Histidinol-phosphate aminotransferase subfamily. In terms of assembly, homodimer. Pyridoxal 5'-phosphate serves as cofactor. Mainly expressed in green tissues.

Its subcellular location is the plastid. It localises to the chloroplast. The catalysed reaction is L-histidinol phosphate + 2-oxoglutarate = 3-(imidazol-4-yl)-2-oxopropyl phosphate + L-glutamate. It participates in amino-acid biosynthesis; L-histidine biosynthesis; L-histidine from 5-phospho-alpha-D-ribose 1-diphosphate: step 7/9. This Nicotiana tabacum (Common tobacco) protein is Histidinol-phosphate aminotransferase, chloroplastic (HPA).